A 418-amino-acid polypeptide reads, in one-letter code: Tryptophan synthase beta chain (418 aa).

Lysine 109 bears the N6-(pyridoxal phosphate)lysine mark.

Belongs to the TrpB family. In terms of assembly, tetramer of two alpha and two beta chains. The cofactor is pyridoxal 5'-phosphate.

The catalysed reaction is (1S,2R)-1-C-(indol-3-yl)glycerol 3-phosphate + L-serine = D-glyceraldehyde 3-phosphate + L-tryptophan + H2O. The protein operates within amino-acid biosynthesis; L-tryptophan biosynthesis; L-tryptophan from chorismate: step 5/5. Functionally, the beta subunit is responsible for the synthesis of L-tryptophan from indole and L-serine. This chain is Tryptophan synthase beta chain, found in Thermus thermophilus (strain ATCC 27634 / DSM 579 / HB8).